We begin with the raw amino-acid sequence, 241 residues long: MADS-box transcription factor 57 (241 aa).

An MADS-box domain is found at methionine 1–asparagine 61. The region spanning isoleucine 85–glutamate 178 is the K-box domain. The interval leucine 216 to proline 241 is disordered.

In terms of assembly, interacts with TB1. Expressed in seedling roots and shoots. Highly expressed in young leaves.

It is found in the nucleus. Its function is as follows. Transcriptional factor that targets the CArG motif 5'-C(A/T)TTAAAAAG-3' in the promoter of D14. Directly suppresses D14 expression to control the outgrowth of axillary buds. The polypeptide is MADS-box transcription factor 57 (Oryza sativa subsp. japonica (Rice)).